Consider the following 1053-residue polypeptide: Polyphosphate kinase (1053 aa).

Disordered stretches follow at residues 23-155, 200-245, and 302-328; these read LKIN…QLME, VQNP…TKSK, and NNNN…STSP. The span at 32 to 50 shows a compositional bias: low complexity; it reads STTTTTSTTTTTTTTTSTS. Acidic residues predominate over residues 81-102; it reads VDFEDDYDEESSSFDEEDEDSA. Positions 143–155 are enriched in polar residues; the sequence is TTANPVQNCQLME. Low complexity predominate over residues 215–239; it reads SSGSSSSSSSNNNNSNSNSNGNCNS. The active-site Phosphohistidine intermediate is the histidine 800. Residues 1027–1053 form a disordered region; the sequence is RSSPIDEDSQTQFMNQTNQKHPVIWSK. A compositionally biased stretch (polar residues) spans 1036–1046; the sequence is QTQFMNQTNQK.

This sequence belongs to the polyphosphate kinase 1 (PPK1) family. In terms of assembly, hexamer. May form higher oligomeric structures in the presence of ATP.

Its subcellular location is the vesicle. It catalyses the reaction [phosphate](n) + ATP = [phosphate](n+1) + ADP. Functionally, catalyzes the reversible transfer of the terminal phosphate of ATP to form a long-chain polyphosphate (polyP). Produces polyP in a broad range of chain lengths (50-300 Pi residues). Involved in development (growth and fruiting body formation), sporulation, phagocytosis, cell division and the late stages of cytokinesis. The sequence is that of Polyphosphate kinase (ppkA) from Dictyostelium discoideum (Social amoeba).